We begin with the raw amino-acid sequence, 519 residues long: Acetylcholine receptor subunit gamma (519 aa).

The N-terminal stretch at 1 to 22 (MHGGQGPQLLLLLLATCLGAQS) is a signal peptide. The Extracellular portion of the chain corresponds to 23-240 (RNQEERLLAD…VVFYLLIQRK (218 aa)). N-linked (GlcNAc...) asparagine glycans are attached at residues asparagine 52 and asparagine 163. The cysteines at positions 150 and 164 are disulfide-linked. The next 3 helical transmembrane spans lie at 241–265 (PLFY…IYFL), 274–292 (CTVA…FLVA), and 308–329 (YLTF…VLNV). Residues 330 to 476 (SLRSPHTHSM…WLLVGRVLDR (147 aa)) lie on the Cytoplasmic side of the membrane. A helical transmembrane segment spans residues 477-497 (VCFLAMLSLFICGTAGIFLMA).

The protein belongs to the ligand-gated ion channel (TC 1.A.9) family. Acetylcholine receptor (TC 1.A.9.1) subfamily. Gamma/CHRNG sub-subfamily. Pentamer of two alpha chains, and one each of the beta, delta, and gamma (in immature muscle) or epsilon (in mature muscle) chains.

It is found in the postsynaptic cell membrane. The protein localises to the cell membrane. It catalyses the reaction K(+)(in) = K(+)(out). The enzyme catalyses Na(+)(in) = Na(+)(out). In terms of biological role, after binding acetylcholine, the AChR responds by an extensive change in conformation that affects all subunits and leads to opening of an ion-conducting channel across the plasma membrane. This chain is Acetylcholine receptor subunit gamma (Chrng), found in Rattus norvegicus (Rat).